The sequence spans 78 residues: Large ribosomal subunit protein uL29 (78 aa).

The protein belongs to the universal ribosomal protein uL29 family.

This is Large ribosomal subunit protein uL29 from Rippkaea orientalis (strain PCC 8801 / RF-1) (Cyanothece sp. (strain PCC 8801)).